Here is a 98-residue protein sequence, read N- to C-terminus: UPF0473 protein GTNG_2486 (98 aa).

Belongs to the UPF0473 family.

The chain is UPF0473 protein GTNG_2486 from Geobacillus thermodenitrificans (strain NG80-2).